The primary structure comprises 152 residues: Cuticle protein 64 (152 aa).

Tandem repeats lie at residues 27-30 (AAPA), 33-37 (AAPAV), 39-42 (AAPA), 86-89 (AAPV), 92-95 (AAPA), 98-101 (AAPA), and 127-130 (AAPA).

In terms of biological role, component of the cuticle of migratory locust which contains more than 100 different structural proteins. The protein is Cuticle protein 64 of Locusta migratoria (Migratory locust).